We begin with the raw amino-acid sequence, 680 residues long: Methionine--tRNA ligase (680 aa).

The short motif at 15–25 (PYANGPVHIGH) is the 'HIGH' region element. Residues Cys147, Cys150, Cys160, and Cys163 each contribute to the Zn(2+) site. The 'KMSKS' region motif lies at 332–336 (KISTS). Residue Thr335 coordinates ATP. In terms of domain architecture, tRNA-binding spans 579 to 680 (DFLKLDIRVG…AEVAAGSQVK (102 aa)).

This sequence belongs to the class-I aminoacyl-tRNA synthetase family. MetG type 1 subfamily. In terms of assembly, homodimer. Zn(2+) is required as a cofactor.

It is found in the cytoplasm. The catalysed reaction is tRNA(Met) + L-methionine + ATP = L-methionyl-tRNA(Met) + AMP + diphosphate. Its function is as follows. Is required not only for elongation of protein synthesis but also for the initiation of all mRNA translation through initiator tRNA(fMet) aminoacylation. This chain is Methionine--tRNA ligase, found in Porphyromonas gingivalis (strain ATCC BAA-308 / W83).